A 315-amino-acid polypeptide reads, in one-letter code: PIH1 domain-containing protein 2 (315 aa).

Belongs to the PIH1 family.

This chain is PIH1 domain-containing protein 2 (PIH1D2), found in Bos taurus (Bovine).